A 71-amino-acid polypeptide reads, in one-letter code: uncharacterized protein (71 aa).

Residues 52-71 form a disordered region; sequence KEKFERKEDEKSKPKGVRED.

This is an uncharacterized protein from Archaeoglobus fulgidus (strain ATCC 49558 / DSM 4304 / JCM 9628 / NBRC 100126 / VC-16).